The chain runs to 123 residues: Small ribosomal subunit protein uS13 (123 aa).

Positions Gly89–Lys123 are disordered. The segment covering Gln101–Lys123 has biased composition (basic residues).

This sequence belongs to the universal ribosomal protein uS13 family. As to quaternary structure, part of the 30S ribosomal subunit. Forms a loose heterodimer with protein S19. Forms two bridges to the 50S subunit in the 70S ribosome.

Functionally, located at the top of the head of the 30S subunit, it contacts several helices of the 16S rRNA. In the 70S ribosome it contacts the 23S rRNA (bridge B1a) and protein L5 of the 50S subunit (bridge B1b), connecting the 2 subunits; these bridges are implicated in subunit movement. Contacts the tRNAs in the A and P-sites. This Cutibacterium acnes (strain DSM 16379 / KPA171202) (Propionibacterium acnes) protein is Small ribosomal subunit protein uS13.